A 125-amino-acid polypeptide reads, in one-letter code: Large ribosomal subunit protein bL12 (125 aa).

The protein belongs to the bacterial ribosomal protein bL12 family. In terms of assembly, homodimer. Part of the ribosomal stalk of the 50S ribosomal subunit. Forms a multimeric L10(L12)X complex, where L10 forms an elongated spine to which 2 to 4 L12 dimers bind in a sequential fashion. Binds GTP-bound translation factors.

Functionally, forms part of the ribosomal stalk which helps the ribosome interact with GTP-bound translation factors. Is thus essential for accurate translation. The sequence is that of Large ribosomal subunit protein bL12 from Thermus thermophilus (strain ATCC BAA-163 / DSM 7039 / HB27).